A 248-amino-acid polypeptide reads, in one-letter code: 5'-nucleotidase SurE (248 aa).

Residues Asp-8, Asp-9, Ser-39, and Asn-91 each contribute to the a divalent metal cation site.

The protein belongs to the SurE nucleotidase family. The cofactor is a divalent metal cation.

It localises to the cytoplasm. It catalyses the reaction a ribonucleoside 5'-phosphate + H2O = a ribonucleoside + phosphate. Nucleotidase that shows phosphatase activity on nucleoside 5'-monophosphates. The chain is 5'-nucleotidase SurE from Citrifermentans bemidjiense (strain ATCC BAA-1014 / DSM 16622 / JCM 12645 / Bem) (Geobacter bemidjiensis).